The chain runs to 80 residues: Exodeoxyribonuclease 7 small subunit (80 aa).

It belongs to the XseB family. Heterooligomer composed of large and small subunits.

The protein resides in the cytoplasm. The enzyme catalyses Exonucleolytic cleavage in either 5'- to 3'- or 3'- to 5'-direction to yield nucleoside 5'-phosphates.. Bidirectionally degrades single-stranded DNA into large acid-insoluble oligonucleotides, which are then degraded further into small acid-soluble oligonucleotides. In Rickettsia canadensis (strain McKiel), this protein is Exodeoxyribonuclease 7 small subunit.